A 172-amino-acid chain; its full sequence is Transcriptional regulator CdrL (172 aa).

The interval 72 to 113 (SPSAVEEVRTTPASGGRADAEEPGDDGETDAEHADTSATGDE) is disordered. A DZANK-type zinc finger spans residues 116-160 (CSQCGAELSADHVYCPNCGGKATHRVFCECGDEIRADWAFCPRCG).

This sequence belongs to the CdrL family.

Its subcellular location is the cytoplasm. Functionally, transcriptional regulator involved in the control of cell division. The polypeptide is Transcriptional regulator CdrL (Halobacterium salinarum (strain ATCC 29341 / DSM 671 / R1)).